The primary structure comprises 358 residues: B3 domain-containing protein Os12g0592300 (358 aa).

The segment at residues 25-122 (RIRFFRLMTG…SFDVLIFDAS (98 aa)) is a DNA-binding region (TF-B3 1). Residues 148 to 215 (YHLSDSEDTS…EKSDDDDEHA (68 aa)) are disordered. Positions 156–181 (TSTPSTFLVGSPHKASTSKKLNGKTK) are enriched in polar residues. Over residues 203-215 (IEEEKSDDDDEHA) the composition is skewed to acidic residues. The TF-B3 2 DNA-binding region spans 252–350 (FVTVLQAPQI…TMTVHVIGKV (99 aa)).

It localises to the nucleus. The protein is B3 domain-containing protein Os12g0592300 of Oryza sativa subsp. japonica (Rice).